Here is a 402-residue protein sequence, read N- to C-terminus: Speedy protein E6 (402 aa).

Residues 1 to 89 (MDRTETRFRK…EEPEKELAPE (89 aa)) are disordered. Polar residues predominate over residues 16–39 (GKITTSRQPHPQNEQSPQRSTSGY). A compositionally biased stretch (acidic residues) spans 76–89 (DESEEEPEKELAPE).

Belongs to the Speedy/Ringo family.

The protein is Speedy protein E6 (SPDYE6) of Homo sapiens (Human).